Consider the following 32-residue polypeptide: Photosystem I reaction center subunit XII (32 aa).

The helical transmembrane segment at 9–28 threads the bilayer; the sequence is VYIALVVALIPGLLAWRLAT.

It belongs to the PsaM family.

The protein localises to the cellular thylakoid membrane. This chain is Photosystem I reaction center subunit XII, found in Nostoc sp. (strain PCC 7120 / SAG 25.82 / UTEX 2576).